The primary structure comprises 321 residues: Probable arabinan endo-1,5-alpha-L-arabinosidase A (321 aa).

The N-terminal stretch at 1 to 19 (MYRLLSVASVPLLASLVHG) is a signal peptide. The active-site Proton acceptor is D34. E200 serves as the catalytic Proton donor. A glycan (N-linked (GlcNAc...) asparagine) is linked at N295.

This sequence belongs to the glycosyl hydrolase 43 family.

Its subcellular location is the secreted. It catalyses the reaction Endohydrolysis of (1-&gt;5)-alpha-arabinofuranosidic linkages in (1-&gt;5)-arabinans.. The protein operates within glycan metabolism; L-arabinan degradation. In terms of biological role, endo-1,5-alpha-L-arabinanase involved in degradation of pectin. Its preferred substrate is linear 1,5-alpha-L-arabinan. This chain is Probable arabinan endo-1,5-alpha-L-arabinosidase A (abnA), found in Aspergillus niger (strain ATCC MYA-4892 / CBS 513.88 / FGSC A1513).